Reading from the N-terminus, the 234-residue chain is DNA repair and recombination protein RadB (234 aa).

The protein belongs to the eukaryotic RecA-like protein family. RadB subfamily.

In terms of biological role, involved in DNA repair and in homologous recombination. May regulate the cleavage reactions of the branch-structured DNA. Has a very weak ATPase activity that is not stimulated by DNA. Binds DNA but does not promote DNA strands exchange. In Methanobrevibacter smithii (strain ATCC 35061 / DSM 861 / OCM 144 / PS), this protein is DNA repair and recombination protein RadB.